A 454-amino-acid chain; its full sequence is Serine/threonine-protein phosphatase C23G10.1 (454 aa).

Asp-196, His-198, Asp-224, and Asn-256 together coordinate Mn(2+). His-257 acts as the Proton donor in catalysis. Residues His-308 and His-382 each coordinate Mn(2+).

The protein belongs to the PPP phosphatase family. PP-1 subfamily. Requires Mn(2+) as cofactor.

The enzyme catalyses O-phospho-L-seryl-[protein] + H2O = L-seryl-[protein] + phosphate. It catalyses the reaction O-phospho-L-threonyl-[protein] + H2O = L-threonyl-[protein] + phosphate. This is Serine/threonine-protein phosphatase C23G10.1 from Caenorhabditis elegans.